The following is a 303-amino-acid chain: uncharacterized protein (303 aa).

4 helical membrane passes run 55-77, 92-111, 208-230, and 240-257; these read FLVK…LFIQ, PAVF…TKII, FSLP…ATSL, and IPHI…KILI.

It localises to the cell membrane. This is an uncharacterized protein from Bacillus subtilis (strain 168).